The chain runs to 670 residues: DEAD-box ATP-dependent RNA helicase 16 (670 aa).

Over residues 1 to 10 the composition is skewed to low complexity; the sequence is MAAAAAASSM. Residues 1 to 97 form a disordered region; it reads MAAAAAASSM…EEREVSFDEL (97 aa). 2 stretches are compositionally biased toward basic and acidic residues: residues 18–30 and 40–49; these read AATE…HDEA and NDGHTAHAAE. The short motif at 92–120 is the Q motif element; the sequence is VSFDELGLDEQLKRALRKKGLDKATPIQR. The Helicase ATP-binding domain maps to 123 to 306; it reads IPLILEGKDV…KLLLHNPFIL (184 aa). An ATP-binding site is contributed by 136–143; it reads AKTGSGKT. Positions 254–257 match the DEAD box motif; that stretch reads DEAD. The region spanning 340 to 523 is the Helicase C-terminal domain; that stretch reads LVLLKLELIQ…PFPLLTKNAV (184 aa). Residues 616–670 form a disordered region; the sequence is DIDKPRRRKRMGFKGGSGRSSDPLKTFSAEGKSRRRGRKERDGEQDRRKRKKVES. The segment covering 654–670 has biased composition (basic and acidic residues); sequence KERDGEQDRRKRKKVES.

This sequence belongs to the DEAD box helicase family. DDX56/DBP9 subfamily.

The enzyme catalyses ATP + H2O = ADP + phosphate + H(+). The chain is DEAD-box ATP-dependent RNA helicase 16 from Oryza sativa subsp. japonica (Rice).